The sequence spans 167 residues: Phosphopantetheine adenylyltransferase (167 aa).

Residue serine 9 coordinates substrate. ATP contacts are provided by residues 9–10 and histidine 17; that span reads SF. The substrate site is built by lysine 41, valine 78, and arginine 92. ATP-binding positions include 93-95, glutamate 103, and 128-134; these read GLR and SRPITAT.

The protein belongs to the bacterial CoaD family. In terms of assembly, homohexamer. Requires Mg(2+) as cofactor.

The protein localises to the cytoplasm. It catalyses the reaction (R)-4'-phosphopantetheine + ATP + H(+) = 3'-dephospho-CoA + diphosphate. It participates in cofactor biosynthesis; coenzyme A biosynthesis; CoA from (R)-pantothenate: step 4/5. Reversibly transfers an adenylyl group from ATP to 4'-phosphopantetheine, yielding dephospho-CoA (dPCoA) and pyrophosphate. The sequence is that of Phosphopantetheine adenylyltransferase from Rhizobium rhizogenes (strain K84 / ATCC BAA-868) (Agrobacterium radiobacter).